A 636-amino-acid chain; its full sequence is DNA-directed RNA polymerase subunit beta' (636 aa).

Cys70, Cys72, Cys85, and Cys88 together coordinate Zn(2+). Residues Asp471, Asp473, and Asp475 each coordinate Mg(2+).

This sequence belongs to the RNA polymerase beta' chain family. RpoC1 subfamily. It depends on Mg(2+) as a cofactor. Zn(2+) serves as cofactor.

Its subcellular location is the plastid. It localises to the cyanelle. The catalysed reaction is RNA(n) + a ribonucleoside 5'-triphosphate = RNA(n+1) + diphosphate. DNA-dependent RNA polymerase catalyzes the transcription of DNA into RNA using the four ribonucleoside triphosphates as substrates. The protein is DNA-directed RNA polymerase subunit beta' of Cyanophora paradoxa.